The sequence spans 867 residues: MKEMVGGCCVCADENGWTDNPLIYCDGENCEVAVHQGCYGIQEVPEGEWFCAKCTKASAMMPGSINEATFCCQLCPFDYGALKKTDRNGWAHVICALYIPEVRFGNVHSMEPVILNDVPTDKFNKLCYICNEERPNDAKKGACMSCNKSTCKRSFHVTCAQRKGLLCEEGAISRNVKYCGYCENHLKKAINDPAIKVIPACPPVQRLSKEQDKKKTVLLTSLPLPPPAPRLHMLADPLPIKSNKVNNVLGLGSAINAVSLEERPASGSTVNSGIFVPPPTAFSPPLTTSSRSSVAQDPSPPLTINKNSLSSSGPLIPSTAHLSATTASATPIMANGSTLPPSSETTVGTHCLQQLQIQSAAAAAITQNQIGPSELNGYPAASQLSSFMHEIPARNTTSVASLLPPGAAEYHLNGSGDEEKTVKAVLTAPLTKAKRIRDSKNDMMDKTHKRPRANARPPAVLGSMSSGSSGGTVGKSPSMQRLQNLVAPIVSETVTDFQRDRVADRTAAERRAAAAQSQPSTSTNGGPNVTIPAVVEVHTNSTNSTNHQNNGLTQNAPASTSMQAGTSSNDGVISQNGTSSTSQSNRLNLPSFMEQLLERQWDQGSSLLMANAHFDVAQLLSCLFQLKSENFRLEENLSGLRKRRDHLFALNSRLAEVNTLDVSKRQRSDGLLLQQQIAHHLDPTSIVPKAEVHKQEPLSAPTSVPLPANHSSSLFEDIKAPKATYSRKTPSNIPLTVPLSTAATALTTTTAASSGAPVNSNIQNHRATPSTAGAPMAATPIMTAVTSANELAALSPERAQALLNMYRMPLDANVAAQLSMITNFPGQVNPSLFSRLLAVNMMNGGLQPNGQPLSALPPPTSATPNGK.

The PHD-type 1 zinc finger occupies 5 to 57 (VGGCCVCADENGWTDNPLIYCDGENCEVAVHQGCYGIQEVPEGEWFCAKCTKA). The C2HC pre-PHD-type 2 zinc finger occupies 69 to 102 (TFCCQLCPFDYGALKKTDRNGWAHVICALYIPEV). Positions 69–186 (TFCCQLCPFD…KYCGYCENHL (118 aa)) are extended PHD2 domain (ePHD2). The PHD-type 2 zinc finger occupies 125-186 (KLCYICNEER…KYCGYCENHL (62 aa)). Disordered regions lie at residues 267–311 (GSTV…SLSS), 440–477 (KNDM…GKSP), 503–586 (ADRT…QSNR), and 753–773 (SSGA…STAG). Residues 285–311 (PLTTSSRSSVAQDPSPPLTINKNSLSS) show a composition bias toward polar residues. The segment covering 503–512 (ADRTAAERRA) has biased composition (basic and acidic residues). The segment covering 516–527 (QSQPSTSTNGGP) has biased composition (polar residues). Over residues 538–550 (HTNSTNSTNHQNN) the composition is skewed to low complexity. Residues 551-573 (GLTQNAPASTSMQAGTSSNDGVI) are compositionally biased toward polar residues. The segment covering 574–585 (SQNGTSSTSQSN) has biased composition (low complexity). Residues 758 to 771 (VNSNIQNHRATPST) show a composition bias toward polar residues.

As to quaternary structure, multimer; in vitro. Interacts (via C-terminus) with dot-1.1 to form a heterodimer known as the zfp-1-dot-1.1 complex or DotCom complex. As to expression, isoform a: Expressed at high levels in maturing oocytes, but at low levels in the rest of the germ line (at protein level). Isoform a: Not expressed in the pharynx, germ line and tail. Isoform c: Not expressed in the germ line (at protein level). Isoform c: Uniformly expressed.

It is found in the nucleus. It localises to the chromosome. Recruits the histone methyltransferase dot-1.1 to chromatin to methylate 'Lys-79' of histone H3 and activate transcription. Recognizes and binds histone H3 methylated at 'Lys-4' (H3K4me) at the promoters of target genes. During stress, the zfp-1-dot-1.1 complex also plays a role in the deubiquitination of histone H2B sites, which negatively modulates the RNA polymerase II-induced transcription of highly expressed genes. In response to stress, binds to the pdk-1 promoter to negatively regulate pdk-1 expression, which negatively modulates daf-16/FOXO-mediated gene expression. Thus, most likely via this mechanism, in response to stress, it confers a protective role against neuronal necrosis. Plays a role in Insulin/IGF-1-like signaling (IIS)- and diet restriction-mediated lifespan extension by controlling daf-16/FOXO and pha-4/FOXA recruitment to target promoters. May negatively regulate the expression of genes required for vulval development. May play a role in axon guidance in D-type motor neurons. May suppress sensitivity to RNAi. Its function is as follows. Required for migration of HSN motor neurons during embryogenesis. This is Zinc finger protein zfp-1 from Caenorhabditis elegans.